Reading from the N-terminus, the 150-residue chain is Large ribosomal subunit protein bL9 (150 aa).

It belongs to the bacterial ribosomal protein bL9 family.

Its function is as follows. Binds to the 23S rRNA. This Neisseria meningitidis serogroup A / serotype 4A (strain DSM 15465 / Z2491) protein is Large ribosomal subunit protein bL9.